Reading from the N-terminus, the 59-residue chain is Phycobilisome degradation protein NblA (59 aa).

It to chloroplast ycf18.

Involved in phycobilisome (PBS) degradation during nutrient deprivation. May mark the PBS for degradation by covalent association with PBS components or may disrupt the PBS via ionic interactions. In Synechococcus elongatus (strain ATCC 33912 / PCC 7942 / FACHB-805) (Anacystis nidulans R2), this protein is Phycobilisome degradation protein NblA.